A 762-amino-acid chain; its full sequence is Homeobox-leucine zipper protein MERISTEM L1 (762 aa).

The segment at 13-72 (MFDMTPKNSENDLGITGSHEEDFETKSGAEVTMENPLEEELQDPNQRPNKKKRYHRHTQR) is disordered. Residues 30 to 39 (SHEEDFETKS) are compositionally biased toward basic and acidic residues. Over residues 60 to 71 (PNKKKRYHRHTQ) the composition is skewed to basic residues. The homeobox DNA-binding region spans 62-121 (KKKRYHRHTQRQIQELESFFKECPHPDDKQRKELSRELSLEPLQVKFWFQNKRTQMKAQH). Residues 110 to 192 (FQNKRTQMKA…DRISAIAAKY (83 aa)) adopt a coiled-coil conformation. Positions 253–484 (SEADKPMIVE…LDRQCERLAS (232 aa)) constitute an START domain.

The protein belongs to the HD-ZIP homeobox family. Class IV subfamily. As to quaternary structure, interacts with GAI/RGA2, RGA/RGA1/GRS, RGL2/SCL19 and PDF2. Interacts with AIL7/PLT7, ANT, BBM and AIL1.

It localises to the nucleus. Probable transcription factor involved in cell specification and pattern formation during embryogenesis. Binds to the L1 box DNA sequence 5'-TAAATG[CT]A-3'. Plays a role in maintaining the identity of L1 cells, possibly by interacting with their L1 box or other target-gene promoters; binds to the LIP1 gene promoter and stimulates its expression upon imbibition. Acts as a positive regulator of gibberellins (GAs)-regulated epidermal gene expression (e.g. LIP1, LIP2, LTP1, FDH and PDF1). Functionally redundant to PDF2. Seems to promote cell differentiation. The protein is Homeobox-leucine zipper protein MERISTEM L1 of Arabidopsis thaliana (Mouse-ear cress).